The chain runs to 183 residues: uncharacterized protein (183 aa).

The N-terminal stretch at 1–23 is a signal peptide; sequence MSAFKKSLLVAGVAMILSNNVFA. A disulfide bridge links Cys-41 with Cys-80.

It belongs to the fimbrial protein family.

It is found in the fimbrium. This is an uncharacterized protein from Escherichia coli (strain K12).